A 220-amino-acid chain; its full sequence is tRNA (guanine-N(7)-)-methyltransferase (220 aa).

Glu42, Glu67, and Asp122 together coordinate S-adenosyl-L-methionine. Asp122 is a catalytic residue. Residues Lys126, Asp158, and Thr198–Glu201 contribute to the substrate site.

The protein belongs to the class I-like SAM-binding methyltransferase superfamily. TrmB family.

It carries out the reaction guanosine(46) in tRNA + S-adenosyl-L-methionine = N(7)-methylguanosine(46) in tRNA + S-adenosyl-L-homocysteine. The protein operates within tRNA modification; N(7)-methylguanine-tRNA biosynthesis. Catalyzes the formation of N(7)-methylguanine at position 46 (m7G46) in tRNA. This Mycoplasma capricolum subsp. capricolum (strain California kid / ATCC 27343 / NCTC 10154) protein is tRNA (guanine-N(7)-)-methyltransferase.